Consider the following 114-residue polypeptide: PDZK1-interacting protein 1 (114 aa).

At 1–28 (MSALSLLILGLLTAVPPASCQQGLGNLQ) the chain is on the extracellular side. Residues 29-51 (PWMQGLIAVAVFLVLVAIAFAVN) traverse the membrane as a helical segment. The Cytoplasmic portion of the chain corresponds to 52–114 (HFWCQEEPEP…EEGKVRSTPM (63 aa)). Ser-85 bears the Phosphoserine mark. The disordered stretch occupies residues 94–114 (EHENAYENVPEEEGKVRSTPM). The span at 105-114 (EEGKVRSTPM) shows a compositional bias: basic and acidic residues.

It belongs to the PDZK1-interacting protein 1/SMIM24 family. As to quaternary structure, forms a heterodimer (via N-terminal transmembrane helix) with SLC5A2/SGLT2 (via TM13); this interaction enhances SLC5A2 transporter activity. Interacts with PDZK1.

It is found in the apical cell membrane. Its function is as follows. Auxiliary protein of electrogenic Na(+)-coupled sugar symporter SLC5A2/SGLT2 and SLC5A1/SGLT1. Essential for the transporter activity of SLC5A2/SGLT2 but not SLC5A1/SGLT1. This Homo sapiens (Human) protein is PDZK1-interacting protein 1.